The following is a 450-amino-acid chain: Ribulose bisphosphate carboxylase large chain (450 aa).

The residue at position 4 (K4) is an N6,N6,N6-trimethyllysine. 2 residues coordinate substrate: N113 and T163. K165 serves as the catalytic Proton acceptor. K167 serves as a coordination point for substrate. 3 residues coordinate Mg(2+): K191, D193, and E194. K191 is modified (N6-carboxylysine). The active-site Proton acceptor is H284. Substrate is bound by residues R285, H317, and S369.

It belongs to the RuBisCO large chain family. Type I subfamily. In terms of assembly, heterohexadecamer of 8 large chains and 8 small chains; disulfide-linked. The disulfide link is formed within the large subunit homodimers. Requires Mg(2+) as cofactor. In terms of processing, the disulfide bond which can form in the large chain dimeric partners within the hexadecamer appears to be associated with oxidative stress and protein turnover.

It localises to the plastid. The protein resides in the chloroplast. The enzyme catalyses 2 (2R)-3-phosphoglycerate + 2 H(+) = D-ribulose 1,5-bisphosphate + CO2 + H2O. It catalyses the reaction D-ribulose 1,5-bisphosphate + O2 = 2-phosphoglycolate + (2R)-3-phosphoglycerate + 2 H(+). Its function is as follows. RuBisCO catalyzes two reactions: the carboxylation of D-ribulose 1,5-bisphosphate, the primary event in carbon dioxide fixation, as well as the oxidative fragmentation of the pentose substrate in the photorespiration process. Both reactions occur simultaneously and in competition at the same active site. This Crassula rupestris subsp. marnieriana (Pygmyweed) protein is Ribulose bisphosphate carboxylase large chain.